The primary structure comprises 94 residues: Mitochondrial import inner membrane translocase subunit Tim8 A (94 aa).

Positions 47-70 (CWDKCIDRPGNKLDSRTESCLVSC) match the Twin CX3C motif motif. 2 disulfides stabilise this stretch: cysteine 47–cysteine 70 and cysteine 51–cysteine 66.

It belongs to the small Tim family. As to quaternary structure, heterohexamer; composed of 3 copies of TIMM8A and 3 copies of TIMM13, named soluble 70 kDa complex. Associates with the TIM22 complex, whose core is composed of TIMM22.

Its subcellular location is the mitochondrion inner membrane. Mitochondrial intermembrane chaperone that participates in the import and insertion of some multi-pass transmembrane proteins into the mitochondrial inner membrane. Also required for the transfer of beta-barrel precursors from the TOM complex to the sorting and assembly machinery (SAM complex) of the outer membrane. Acts as a chaperone-like protein that protects the hydrophobic precursors from aggregation and guide them through the mitochondrial intermembrane space. The TIMM8-TIMM13 complex mediates the import of some proteins while the predominant TIMM9-TIMM10 70 kDa complex mediates the import of much more proteins. This Xenopus laevis (African clawed frog) protein is Mitochondrial import inner membrane translocase subunit Tim8 A (timm8a).